The sequence spans 279 residues: Large ribosomal subunit protein uL2 (279 aa).

2 disordered regions span residues 1–59 (MGIR…GGHK) and 224–279 (VAMN…KNKR). Positions 50–59 (TTRHKGGGHK) are enriched in basic residues. The span at 253–268 (REGRTRRPNKESDKLI) shows a compositional bias: basic and acidic residues. Over residues 269–279 (VRRRRTGKNKR) the composition is skewed to basic residues.

This sequence belongs to the universal ribosomal protein uL2 family. In terms of assembly, part of the 50S ribosomal subunit. Forms a bridge to the 30S subunit in the 70S ribosome.

In terms of biological role, one of the primary rRNA binding proteins. Required for association of the 30S and 50S subunits to form the 70S ribosome, for tRNA binding and peptide bond formation. It has been suggested to have peptidyltransferase activity; this is somewhat controversial. Makes several contacts with the 16S rRNA in the 70S ribosome. The polypeptide is Large ribosomal subunit protein uL2 (Pseudarthrobacter chlorophenolicus (strain ATCC 700700 / DSM 12829 / CIP 107037 / JCM 12360 / KCTC 9906 / NCIMB 13794 / A6) (Arthrobacter chlorophenolicus)).